A 151-amino-acid chain; its full sequence is Cysteine protease inhibitor 5 (151 aa).

Disulfide bonds link Cys13-Cys65 and Cys114-Cys120.

It belongs to the protease inhibitor I3 (leguminous Kunitz-type inhibitor) family.

It localises to the vacuole. Inhibitor of cysteine proteases. May protect the plant by inhibiting proteases of invading organisms. This is Cysteine protease inhibitor 5 from Solanum tuberosum (Potato).